Here is a 211-residue protein sequence, read N- to C-terminus: Probable nicotinate-nucleotide adenylyltransferase (211 aa).

Belongs to the NadD family.

The catalysed reaction is nicotinate beta-D-ribonucleotide + ATP + H(+) = deamido-NAD(+) + diphosphate. It functions in the pathway cofactor biosynthesis; NAD(+) biosynthesis; deamido-NAD(+) from nicotinate D-ribonucleotide: step 1/1. Functionally, catalyzes the reversible adenylation of nicotinate mononucleotide (NaMN) to nicotinic acid adenine dinucleotide (NaAD). The chain is Probable nicotinate-nucleotide adenylyltransferase from Lactiplantibacillus plantarum (strain ATCC BAA-793 / NCIMB 8826 / WCFS1) (Lactobacillus plantarum).